The following is a 339-amino-acid chain: UPF0324 membrane protein spyM18_1033 (339 aa).

9 consecutive transmembrane segments (helical) span residues K7–L24, F28–H50, G57–L79, A84–G106, A118–I140, A150–L172, F256–V275, F290–L307, and A314–L336.

This sequence belongs to the UPF0324 family.

The protein localises to the cell membrane. This Streptococcus pyogenes serotype M18 (strain MGAS8232) protein is UPF0324 membrane protein spyM18_1033.